We begin with the raw amino-acid sequence, 140 residues long: Large ribosomal subunit protein uL11 (140 aa).

This sequence belongs to the universal ribosomal protein uL11 family. As to quaternary structure, part of the ribosomal stalk of the 50S ribosomal subunit. Interacts with L10 and the large rRNA to form the base of the stalk. L10 forms an elongated spine to which L12 dimers bind in a sequential fashion forming a multimeric L10(L12)X complex. One or more lysine residues are methylated.

Its function is as follows. Forms part of the ribosomal stalk which helps the ribosome interact with GTP-bound translation factors. The chain is Large ribosomal subunit protein uL11 from Karelsulcia muelleri (strain GWSS) (Sulcia muelleri).